Reading from the N-terminus, the 216-residue chain is Thiamine-phosphate synthase (216 aa).

Residues 39–43 and asparagine 71 contribute to the 4-amino-2-methyl-5-(diphosphooxymethyl)pyrimidine site; that span reads QLRRK. 2 residues coordinate Mg(2+): aspartate 72 and aspartate 91. Serine 109 is a 4-amino-2-methyl-5-(diphosphooxymethyl)pyrimidine binding site. Residue 136 to 138 coordinates 2-[(2R,5Z)-2-carboxy-4-methylthiazol-5(2H)-ylidene]ethyl phosphate; sequence SPT. Lysine 139 serves as a coordination point for 4-amino-2-methyl-5-(diphosphooxymethyl)pyrimidine. 2-[(2R,5Z)-2-carboxy-4-methylthiazol-5(2H)-ylidene]ethyl phosphate-binding positions include glycine 172 and 192–193; that span reads IT.

Belongs to the thiamine-phosphate synthase family. The cofactor is Mg(2+).

The catalysed reaction is 2-[(2R,5Z)-2-carboxy-4-methylthiazol-5(2H)-ylidene]ethyl phosphate + 4-amino-2-methyl-5-(diphosphooxymethyl)pyrimidine + 2 H(+) = thiamine phosphate + CO2 + diphosphate. It catalyses the reaction 2-(2-carboxy-4-methylthiazol-5-yl)ethyl phosphate + 4-amino-2-methyl-5-(diphosphooxymethyl)pyrimidine + 2 H(+) = thiamine phosphate + CO2 + diphosphate. The enzyme catalyses 4-methyl-5-(2-phosphooxyethyl)-thiazole + 4-amino-2-methyl-5-(diphosphooxymethyl)pyrimidine + H(+) = thiamine phosphate + diphosphate. Its pathway is cofactor biosynthesis; thiamine diphosphate biosynthesis; thiamine phosphate from 4-amino-2-methyl-5-diphosphomethylpyrimidine and 4-methyl-5-(2-phosphoethyl)-thiazole: step 1/1. Its function is as follows. Condenses 4-methyl-5-(beta-hydroxyethyl)thiazole monophosphate (THZ-P) and 2-methyl-4-amino-5-hydroxymethyl pyrimidine pyrophosphate (HMP-PP) to form thiamine monophosphate (TMP). The chain is Thiamine-phosphate synthase from Bordetella avium (strain 197N).